We begin with the raw amino-acid sequence, 351 residues long: uncharacterized protein (351 aa).

Residues aspartate 215, aspartate 226, histidine 290, glutamate 319, and glutamate 333 each contribute to the Mn(2+) site.

It belongs to the peptidase M24B family. The cofactor is Mn(2+).

This is an uncharacterized protein from Staphylococcus epidermidis (strain ATCC 35984 / DSM 28319 / BCRC 17069 / CCUG 31568 / BM 3577 / RP62A).